Consider the following 160-residue polypeptide: Baculoviral IAP repeat-containing protein 5.1 (160 aa).

Residues 27 to 97 form a BIR repeat; the sequence is RLATFADWPF…KRSASCGFLS (71 aa). At T43 the chain carries Phosphothreonine; by CDK1. Residues C66, C69, H86, and C93 each coordinate Zn(2+).

It belongs to the IAP family. As to quaternary structure, component of the CPC at least composed of survivin/birc5, incenp, cdca8/borealin and/or cdca9/dasra-A, and aurkb/aurora-B. Interacts directly with incenp (via N-terminus), and may weakly interact with aurkb (via N-terminus) to stabilize the complex. Interacts with GTP-bound ran in both the S and M phases of the cell cycle. Also found in a complex with ubiquitin-mediated signaling proteins including at least usp9x/xFAM, nploc4/npl4 and ufd1. Ubiquitination is required for centrosome-targeting.

It is found in the cytoplasm. Its subcellular location is the nucleus. The protein resides in the chromosome. It localises to the centromere. The protein localises to the cytoskeleton. It is found in the spindle. Functionally, component of the chromosomal passenger complex (CPC), a complex that acts as a key regulator of mitosis. The CPC complex has essential functions at the centromere in ensuring correct chromosome alignment and segregation and is required for chromatin-induced microtubule stabilization and spindle assembly. Stimulates the mitotic kinase activity of aurkb/aurora-B in the CPC. Does not appear to exhibit anti-apoptotic activity. In Xenopus tropicalis (Western clawed frog), this protein is Baculoviral IAP repeat-containing protein 5.1 (birc5.1).